Here is a 552-residue protein sequence, read N- to C-terminus: Putative transport protein APL_0966 (552 aa).

Helical transmembrane passes span 4–24 (IAII…IGHI), 29–49 (VGLG…CTHL), 65–85 (FGLI…FFAS), 95–115 (GFAV…HKLF), and 161–181 (IAYP…RIIF). RCK C-terminal domains follow at residues 190 to 275 (QEFD…ILGE) and 277 to 360 (ADVS…IIGD). Helical transmembrane passes span 370–390 (MLPI…PLYI), 402–424 (AGGP…LYWF), 438–458 (IVLF…DTLL), 463–483 (LAWM…TGFV), 492–512 (YLSL…LAFA), and 529–549 (VYPL…ILLW).

This sequence belongs to the AAE transporter (TC 2.A.81) family. YidE subfamily.

It localises to the cell membrane. In Actinobacillus pleuropneumoniae serotype 5b (strain L20), this protein is Putative transport protein APL_0966.